Reading from the N-terminus, the 536-residue chain is MTSFLLFNPGSLQQQQQPHSFSKDFINNNNNNNNNCQSSFSTPLGGSNGINNPNATTNNTTTTTTTTTTTTNPLSGSTGINNSNIEVIDIDQCLKHCGCRNPKELIQLIRSDAIENVEISWPDDMGLWYMNTIKSHEVSLQNLVEGVRVAGQLLLLDPTSARFDLSKKQKTIVVRSVNIDRSSSSLSSEDDDCCYETEEDDNGEDGEVVRSPQSKFSLLLDESEKFRKSFSLKKSSRSAFKKNKKDYHHGSSAGGGGSSGGVVVLHYDNNGNQLHYSNSMTDNNSRHHQHGGVGDGYPHSPPAAGGKSLGKRGYQQWSNSNNNNNNNNNNNNNNNGASGFVQSDEDLDASWLEEIKRNRAEVVPDLSSPALFSMDKRSPSPTLGSSCGSSSPGLNNSGNEMNNSQDSPLGVSGGNGNSLNISSGIQCPPGANIDSAEKAILEGQIHLPPLLRPRQYHACKTSKENRPTKRRKNHTSLFCRHCGTTDTPEWRRGPDGRKSLCNACGLHYSKLVKRENMAVPELSRTFELSEILNPSD.

Composition is skewed to polar residues over residues 1–20 (MTSF…QPHS) and 36–55 (CQSS…NPNA). 5 disordered regions span residues 1-77 (MTSF…LSGS), 183-211 (SSSL…VVRS), 237-258 (RSAF…GGGS), 273-342 (QLHY…GFVQ), and 370-423 (ALFS…NISS). Low complexity predominate over residues 56–72 (TTNNTTTTTTTTTTTTN). A compositionally biased stretch (acidic residues) spans 188–206 (SEDDDCCYETEEDDNGEDG). The span at 237–247 (RSAFKKNKKDY) shows a compositional bias: basic residues. A compositionally biased stretch (polar residues) spans 273–283 (QLHYSNSMTDN). Composition is skewed to low complexity over residues 318 to 335 (SNSN…NNNN) and 379 to 399 (PSPT…NSGN). The segment at 479 to 504 (CRHCGTTDTPEWRRGPDGRKSLCNAC) adopts a GATA-type zinc-finger fold.

The chain is GATA zinc finger domain-containing protein 9 (gtaI) from Dictyostelium discoideum (Social amoeba).